A 1470-amino-acid chain; its full sequence is Isonitrile lipopeptide synthase (1470 aa).

Residues 584-603 (PEPESQEAARPTAPAPTAPA) form a disordered region. The Carrier domain maps to 974 to 1049 (AHDSTLERTI…ELARFLKQQE (76 aa)). The residue at position 1009 (serine 1009) is an O-(pantetheine 4'-phosphoryl)serine. The span at 1049–1059 (EQQAHAQVQPR) shows a compositional bias: low complexity. The interval 1049–1070 (EQQAHAQVQPRPAGPGLPPTLL) is disordered.

Belongs to the ATP-dependent AMP-binding enzyme family. Pantetheine 4'-phosphate serves as cofactor.

The enzyme catalyses 2 a (3R)-3-isocyanyl-fatty acyl-[ACP] + L-lysine + ATP + 2 NADPH = an isonitrile lipopeptide + 2 holo-[ACP] + AMP + diphosphate + 2 NADP(+). It carries out the reaction 2 (3R)-3-isocyanylbutanoyl-[ACP] + L-lysine + ATP + 2 NADPH = (2S)-2,6-bis[(3R)-3-isocyanobutanamido]hexan-1-ol + 2 holo-[ACP] + AMP + diphosphate + 2 NADP(+). In terms of biological role, nonribosomal peptide synthetase (NRPS) involved in the biosynthesis of a unique class of isonitrile lipopeptides (INLPs). Catalyzes the final step in the pathway, i.e. the condensation of a (3R)-3-isocyanyl-fatty acyl-[ACP] to both amino groups of a lysine, producing isonitrile lipopeptides. Can use (3R)-3-isocyanylbutanoyl-[ACP] as substrate, leading to (2S)-2,6-bis[(3R)-3-isocyanobutanamido]hexan-1-ol. The chain is Isonitrile lipopeptide synthase from Streptomyces coeruleorubidus.